Here is a 253-residue protein sequence, read N- to C-terminus: Tryptophan synthase alpha chain (253 aa).

Active-site proton acceptor residues include Glu46 and Asp57.

This sequence belongs to the TrpA family. Tetramer of two alpha and two beta chains.

The enzyme catalyses (1S,2R)-1-C-(indol-3-yl)glycerol 3-phosphate + L-serine = D-glyceraldehyde 3-phosphate + L-tryptophan + H2O. It participates in amino-acid biosynthesis; L-tryptophan biosynthesis; L-tryptophan from chorismate: step 5/5. Its function is as follows. The alpha subunit is responsible for the aldol cleavage of indoleglycerol phosphate to indole and glyceraldehyde 3-phosphate. The sequence is that of Tryptophan synthase alpha chain from Dictyoglomus turgidum (strain DSM 6724 / Z-1310).